The following is a 522-amino-acid chain: DNA damage-binding protein CMR1 (522 aa).

Positions 38–100 are disordered; it reads AGVLEKSRAP…DNQLLKMGSP (63 aa). The segment covering 54 to 63 has biased composition (polar residues); the sequence is TTNTRATKSA. Ser64 is modified (phosphoserine). Thr69 carries the post-translational modification Phosphothreonine. The segment covering 75–84 has biased composition (basic and acidic residues); the sequence is LRGESADDVK. WD repeat units lie at residues 183–224, 239–281, 287–327, 331–371, 388–427, 442–481, and 482–521; these read ITYE…LADS, LFTK…EVLT, DDSL…SEYN, LADK…KKPE, DSRL…HLSA, GRWT…LAHL, and PTAT…IKQE. Phosphoserine is present on Ser224.

It belongs to the WD repeat DDB2/WDR76 family.

The protein localises to the cytoplasm. Its subcellular location is the nucleus. DNA-binding protein that binds to both single- and double-stranded DNA. Binds preferentially to UV-damaged DNA in vitro. May be involved in DNA-metabolic processes. In Saccharomyces cerevisiae (strain ATCC 204508 / S288c) (Baker's yeast), this protein is DNA damage-binding protein CMR1.